The primary structure comprises 289 residues: Rhodopsin (289 aa).

Residues 1 to 7 (YLVSPAG) are Extracellular-facing. Residues 8–32 (YAALGAYMFLLILVGFPVNFLTLYV) traverse the membrane as a helical segment. Over 33-44 (TLEHKKLRTPLN) the chain is Cytoplasmic. A helical transmembrane segment spans residues 45–67 (YILLNLAVADLFMVLGGFTTTMY). At 68–81 (TSMHGYFVLGRLGC) the chain is on the extracellular side. Cysteine 81 and cysteine 158 are disulfide-bonded. A helical transmembrane segment spans residues 82–104 (NLEGFFVTLGGEIALWSLVVLAI). The short motif at 105-107 (ERW) is the 'Ionic lock' involved in activated form stabilization element. At 105 to 123 (ERWIGVFKSIRNFRFTEDH) the chain is on the cytoplasmic side. The chain crosses the membrane as a helical span at residues 124-144 (AIMGLGFSWVMAATCAVPPLV). The Extracellular portion of the chain corresponds to 145 to 173 (GWLRYIPEGMQCSCGVDYYTRAEGFNNES). N-linked (GlcNAc...) asparagine glycosylation is present at asparagine 171. The helical transmembrane segment at 174-195 (FVIYMFIVHFLIPLIVIFFCYG) threads the bilayer. The Cytoplasmic portion of the chain corresponds to 196–223 (RLLCAVKEAAAAQQESETTQRAEKEVSR). A helical transmembrane segment spans residues 224–245 (MVVIMVIGYLVCWLPYASVAWW). Residues 246 to 257 (IFCNQGSEFGPI) lie on the Extracellular side of the membrane. Residues 258–279 (FMTLPAFFAKSPAIYNPLIYIC) form a helical membrane-spanning segment. Position 267 is an N6-(retinylidene)lysine (lysine 267). Over 280–289 (MNKQFPHCMI) the chain is Cytoplasmic.

It belongs to the G-protein coupled receptor 1 family. Opsin subfamily. In terms of processing, phosphorylated on some or all of the serine and threonine residues present in the C-terminal region. Contains one covalently linked retinal chromophore.

Its subcellular location is the membrane. The protein localises to the cell projection. It localises to the cilium. The protein resides in the photoreceptor outer segment. Functionally, photoreceptor required for image-forming vision at low light intensity. While most salt water fish species use retinal as chromophore, most freshwater fish use 3-dehydroretinal, or a mixture of retinal and 3-dehydroretinal. Light-induced isomerization of 11-cis to all-trans retinal triggers a conformational change that activates signaling via G-proteins. Subsequent receptor phosphorylation mediates displacement of the bound G-protein alpha subunit by arrestin and terminates signaling. This Leocottus kesslerii (Kessler's sculpin) protein is Rhodopsin (rho).